Reading from the N-terminus, the 616-residue chain is Dihydroxy-acid dehydratase (616 aa).

Asp-81 serves as a coordination point for Mg(2+). Cys-122 contacts [2Fe-2S] cluster. The Mg(2+) site is built by Asp-123 and Lys-124. At Lys-124 the chain carries N6-carboxylysine. Cys-195 serves as a coordination point for [2Fe-2S] cluster. Glu-491 contacts Mg(2+). The Proton acceptor role is filled by Ser-517.

This sequence belongs to the IlvD/Edd family. In terms of assembly, homodimer. The cofactor is [2Fe-2S] cluster. Mg(2+) is required as a cofactor.

It carries out the reaction (2R)-2,3-dihydroxy-3-methylbutanoate = 3-methyl-2-oxobutanoate + H2O. The enzyme catalyses (2R,3R)-2,3-dihydroxy-3-methylpentanoate = (S)-3-methyl-2-oxopentanoate + H2O. It participates in amino-acid biosynthesis; L-isoleucine biosynthesis; L-isoleucine from 2-oxobutanoate: step 3/4. Its pathway is amino-acid biosynthesis; L-valine biosynthesis; L-valine from pyruvate: step 3/4. Functions in the biosynthesis of branched-chain amino acids. Catalyzes the dehydration of (2R,3R)-2,3-dihydroxy-3-methylpentanoate (2,3-dihydroxy-3-methylvalerate) into 2-oxo-3-methylpentanoate (2-oxo-3-methylvalerate) and of (2R)-2,3-dihydroxy-3-methylbutanoate (2,3-dihydroxyisovalerate) into 2-oxo-3-methylbutanoate (2-oxoisovalerate), the penultimate precursor to L-isoleucine and L-valine, respectively. This is Dihydroxy-acid dehydratase from Salmonella schwarzengrund (strain CVM19633).